Reading from the N-terminus, the 890-residue chain is Alanine--tRNA ligase (890 aa).

The Zn(2+) site is built by histidine 578, histidine 582, cysteine 689, and histidine 693.

This sequence belongs to the class-II aminoacyl-tRNA synthetase family. It depends on Zn(2+) as a cofactor.

It localises to the cytoplasm. The enzyme catalyses tRNA(Ala) + L-alanine + ATP = L-alanyl-tRNA(Ala) + AMP + diphosphate. Its function is as follows. Catalyzes the attachment of alanine to tRNA(Ala) in a two-step reaction: alanine is first activated by ATP to form Ala-AMP and then transferred to the acceptor end of tRNA(Ala). Also edits incorrectly charged Ser-tRNA(Ala) and Gly-tRNA(Ala) via its editing domain. The protein is Alanine--tRNA ligase of Deinococcus radiodurans (strain ATCC 13939 / DSM 20539 / JCM 16871 / CCUG 27074 / LMG 4051 / NBRC 15346 / NCIMB 9279 / VKM B-1422 / R1).